A 969-amino-acid polypeptide reads, in one-letter code: Glycine dehydrogenase (decarboxylating) (969 aa).

Lysine 716 is subject to N6-(pyridoxal phosphate)lysine.

The protein belongs to the GcvP family. In terms of assembly, the glycine cleavage system is composed of four proteins: P, T, L and H. It depends on pyridoxal 5'-phosphate as a cofactor.

The enzyme catalyses N(6)-[(R)-lipoyl]-L-lysyl-[glycine-cleavage complex H protein] + glycine + H(+) = N(6)-[(R)-S(8)-aminomethyldihydrolipoyl]-L-lysyl-[glycine-cleavage complex H protein] + CO2. Functionally, the glycine cleavage system catalyzes the degradation of glycine. The P protein binds the alpha-amino group of glycine through its pyridoxal phosphate cofactor; CO(2) is released and the remaining methylamine moiety is then transferred to the lipoamide cofactor of the H protein. The sequence is that of Glycine dehydrogenase (decarboxylating) from Shewanella woodyi (strain ATCC 51908 / MS32).